A 414-amino-acid chain; its full sequence is Proton/glutamate-aspartate symporter (414 aa).

Topologically, residues 1 to 3 (MKK) are cytoplasmic. The chain crosses the membrane as a helical span at residues 4-24 (LIAFQILIALAVGAVIGHFFP). Over 25–42 (DFGMALRPVGDGFIRLIK) the chain is Extracellular. A helical membrane pass occupies residues 43–63 (MIVVPIVFSTIVIGAAGSGSM). Residues 64–73 (KKMGSLGIKT) are Cytoplasmic-facing. A helical membrane pass occupies residues 74-94 (IIWFEVITTLVLGLGLLLANV). At 95 to 144 (LKPGVGLDLSHLAKKDIHELSGYTDKVVDFKQMILDIIPTNIIDVMARND) the chain is on the extracellular side. Residues 145 to 165 (LLAVIFFAILFGVAAAGIGKA) form a helical membrane-spanning segment. Residues 166–182 (SEPVMKFFESTAQIMFK) are Cytoplasmic-facing. A helical transmembrane segment spans residues 183-203 (LTQIVMVTAPIGVLALMAASV). Over 204-219 (GQYGIELLLPMFKLVG) the chain is Extracellular. The helical transmembrane segment at 220–240 (TVFLGLFLILFVLFPLVGLIF) threads the bilayer. A topological domain (cytoplasmic) is located at residue Gln241. The chain crosses the membrane as a helical span at residues 242-262 (IKYFEVLKMIWDLFLIAFSTT). Residues 263–300 (STETILPQLMDRMEKYGCPKRVVSFVVPSGLSLNCDGS) are Extracellular-facing. Residues 301–321 (SLYLSVSCIFLAQAFQVDMTL) traverse the membrane as a helical segment. Topologically, residues 322–324 (SQQ) are cytoplasmic. A run of 2 helical transmembrane segments spans residues 325–345 (LLMM…PSGS) and 346–366 (LVVL…VAII). The Cytoplasmic segment spans residues 367-414 (AGVDRVMDMARTGVNVPGHAIACIVVSKWEKAFRQKEWVSANSQTESI).

Belongs to the dicarboxylate/amino acid:cation symporter (DAACS) (TC 2.A.23) family.

It is found in the cell membrane. Its activity is regulated as follows. Glutamate uptake is inhibited by beta-hydroxyaspartate and cysteic acid. Catalyzes the proton-dependent, binding-protein-independent transport of glutamate and aspartate. In Bacillus subtilis (strain 168), this protein is Proton/glutamate-aspartate symporter.